Here is a 505-residue protein sequence, read N- to C-terminus: Prenylcysteine oxidase 1 (505 aa).

Positions 1–27 (MGRVVAELVSSLLGLWLLLCSCGCPEG) are cleaved as a signal peptide. Asparagine 196, asparagine 323, and asparagine 353 each carry an N-linked (GlcNAc...) asparagine glycan.

It belongs to the prenylcysteine oxidase family. Requires FAD as cofactor. As to expression, widely expressed.

Its subcellular location is the lysosome. It carries out the reaction an S-polyprenyl-L-cysteine + O2 + H2O = a polyprenal + L-cysteine + H2O2. It catalyses the reaction S-(2E,6E)-farnesyl-L-cysteine + O2 + H2O = (2E,6E)-farnesal + L-cysteine + H2O2. The catalysed reaction is [(2E,6E,10E)-geranylgeranyl]-L-cysteine + O2 + H2O = (2E,6E,10E)-geranylgeranial + L-cysteine + H2O2. Prenylcysteine oxidase that cleaves the thioether bond of prenyl-L-cysteines, such as farnesylcysteine and geranylgeranylcysteine. Only active against free prenylcysteines and not prenylcysteine residues within prenylated proteins or peptides. Involved in the final step in the degradation of prenylated proteins, by degrading prenylcysteines after the protein has been degraded. The protein is Prenylcysteine oxidase 1 of Homo sapiens (Human).